The chain runs to 186 residues: Large ribosomal subunit protein bL9 (186 aa).

A compositionally biased stretch (basic and acidic residues) spans P151–E167. A disordered region spans residues P151–A186. Over residues S168–E180 the composition is skewed to acidic residues.

This sequence belongs to the bacterial ribosomal protein bL9 family.

Functionally, binds to the 23S rRNA. The protein is Large ribosomal subunit protein bL9 of Acidiphilium cryptum (strain JF-5).